The following is a 479-amino-acid chain: MAQHAVYFPDAFLTQMREAMPSTLSFDEFISACQRPLRRSIRINTLKISVADFLALIAPYGWSLTPIPWCHEGFWIERDDEEALPLGSTAEHLSGLFYIQEASSMLPVAALFADDNHPQRVMDMAAAPGSKTTQIAARMGNRGAILANEFSASRVKVLHANISRCGIANTALTHFDGRVFGAALPEMFDAILLDAPCSGEGVVRKDPDALKNWSPESNLDIAATQRELLDSAFHALRPGGTLVYSTCTLNRQENEDVCLWLKETYADAVEFLPLGDLFPDADRALTPEGFLHVFPQIYDCEGFFVARLRKMSSLPAMPAPGYKVGAFPFTPLKGREALNVTQAANAVGLLWDENLHLWQREKEVWLFPAEIESLIGKVRFSRLGIKLAESHNKGYRWQHEATIALACPTHAHAFELSAQEAEEWYRGRDIYPQTPPAADDVLVTFQHQPLGLAKRIGARIKNSYPRELVRDGKLFTGNS.

S-adenosyl-L-methionine contacts are provided by residues 125–131 (AAAPGSK), E149, D176, and D194. The Nucleophile role is filled by C247.

Belongs to the class I-like SAM-binding methyltransferase superfamily. RsmB/NOP family.

It localises to the cytoplasm. It carries out the reaction cytidine(1407) in 16S rRNA + S-adenosyl-L-methionine = 5-methylcytidine(1407) in 16S rRNA + S-adenosyl-L-homocysteine + H(+). Specifically methylates the cytosine at position 1407 (m5C1407) of 16S rRNA. In Salmonella paratyphi A (strain ATCC 9150 / SARB42), this protein is Ribosomal RNA small subunit methyltransferase F.